A 153-amino-acid polypeptide reads, in one-letter code: Fucose mutarotase (153 aa).

Histidine 24 functions as the Proton donor in the catalytic mechanism. A substrate-binding site is contributed by aspartate 32. Aspartate 69 is a catalytic residue. Positions 78, 119, 137, and 139 each coordinate substrate. Residue tyrosine 119 is part of the active site.

This sequence belongs to the RbsD / FucU family.

It carries out the reaction alpha-L-fucose = beta-L-fucose. Functionally, involved in the interconversion between alpha- and beta-L-fucoses. This is Fucose mutarotase (fuom) from Danio rerio (Zebrafish).